Here is a 162-residue protein sequence, read N- to C-terminus: MNFEKKLNGILSFTYLALVLCLVMPFMLILVLDTTFTFNKFNLNFVYRQIVELIVLSIFAGFITSFALYNKICRISTEELKRDILENNGLKTIFKIAQYEVMVSIFYSLLLLIILLNKQLLYYGFTAIFQIFFTFCAIFVPLFIFGSLVCRTILLHKIRGTT.

4 consecutive transmembrane segments (helical) span residues 10–30 (ILSFTYLALVLCLVMPFMLIL), 50–70 (IVELIVLSIFAGFITSFALYN), 96–116 (IAQYEVMVSIFYSLLLLIILL), and 125–145 (FTAIFQIFFTFCAIFVPLFIF).

The protein localises to the cell membrane. This is an uncharacterized protein from Methanocaldococcus jannaschii (strain ATCC 43067 / DSM 2661 / JAL-1 / JCM 10045 / NBRC 100440) (Methanococcus jannaschii).